The following is a 224-amino-acid chain: Large ribosomal subunit protein uL1 (224 aa).

Belongs to the universal ribosomal protein uL1 family. In terms of assembly, part of the 50S ribosomal subunit.

Functionally, binds directly to 23S rRNA. The L1 stalk is quite mobile in the ribosome, and is involved in E site tRNA release. Its function is as follows. Protein L1 is also a translational repressor protein, it controls the translation of the L11 operon by binding to its mRNA. The protein is Large ribosomal subunit protein uL1 of Borrelia duttonii (strain Ly).